Here is a 458-residue protein sequence, read N- to C-terminus: tRNA modification GTPase MnmE (458 aa).

(6S)-5-formyl-5,6,7,8-tetrahydrofolate-binding residues include Arg-22, Glu-86, and Arg-125. In terms of domain architecture, TrmE-type G spans 221–379 (GIRTVILGRP…LEQTITEMFF (159 aa)). Asn-231 serves as a coordination point for K(+). GTP is bound by residues 231 to 236 (NAGKSS), 250 to 256 (TEIAGTT), and 275 to 278 (DTAG). Mg(2+) is bound at residue Ser-235. Positions 250, 252, and 255 each coordinate K(+). Thr-256 provides a ligand contact to Mg(2+). Lys-458 provides a ligand contact to (6S)-5-formyl-5,6,7,8-tetrahydrofolate.

Belongs to the TRAFAC class TrmE-Era-EngA-EngB-Septin-like GTPase superfamily. TrmE GTPase family. In terms of assembly, homodimer. Heterotetramer of two MnmE and two MnmG subunits. K(+) is required as a cofactor.

Its subcellular location is the cytoplasm. In terms of biological role, exhibits a very high intrinsic GTPase hydrolysis rate. Involved in the addition of a carboxymethylaminomethyl (cmnm) group at the wobble position (U34) of certain tRNAs, forming tRNA-cmnm(5)s(2)U34. The protein is tRNA modification GTPase MnmE of Lachnoclostridium phytofermentans (strain ATCC 700394 / DSM 18823 / ISDg) (Clostridium phytofermentans).